The following is a 279-amino-acid chain: HTH-type transcriptional regulator HdfR (279 aa).

Residues 1 to 58 enclose the HTH lysR-type domain; it reads MDTELLKTFLEVSRTRHFGRAAESLYLTQSAVSFRIRQLENQLGVNLFTRHRNNIRLT. The segment at residues 18–37 is a DNA-binding region (H-T-H motif); sequence FGRAAESLYLTQSAVSFRIR.

This sequence belongs to the LysR transcriptional regulatory family.

Its function is as follows. Negatively regulates the transcription of the flagellar master operon flhDC by binding to the upstream region of the operon. The chain is HTH-type transcriptional regulator HdfR from Shigella boydii serotype 18 (strain CDC 3083-94 / BS512).